Here is a 72-residue protein sequence, read N- to C-terminus: Cytochrome c oxidase subunit 8C, mitochondrial (72 aa).

A mitochondrion-targeting transit peptide spans 1-29; the sequence is MSRLLLLCSSLLRHRAVLFSKPGHPGRLS. The Mitochondrial matrix portion of the chain corresponds to 30–40; it reads HSESPQKKILS. A helical membrane pass occupies residues 41-64; it reads PTESAVGIVVFFTTFYIPAAYVLS. The Mitochondrial intermembrane segment spans residues 65-72; sequence SLKYFKGE.

Belongs to the cytochrome c oxidase VIII family. In terms of assembly, component of the cytochrome c oxidase (complex IV, CIV), a multisubunit enzyme composed of 14 subunits. The complex is composed of a catalytic core of 3 subunits MT-CO1, MT-CO2 and MT-CO3, encoded in the mitochondrial DNA, and 11 supernumerary subunits COX4I, COX5A, COX5B, COX6A, COX6B, COX6C, COX7A, COX7B, COX7C, COX8 and NDUFA4, which are encoded in the nuclear genome. The complex exists as a monomer or a dimer and forms supercomplexes (SCs) in the inner mitochondrial membrane with NADH-ubiquinone oxidoreductase (complex I, CI) and ubiquinol-cytochrome c oxidoreductase (cytochrome b-c1 complex, complex III, CIII), resulting in different assemblies (supercomplex SCI(1)III(2)IV(1) and megacomplex MCI(2)III(2)IV(2)).

It localises to the mitochondrion inner membrane. Its pathway is energy metabolism; oxidative phosphorylation. Its function is as follows. Component of the cytochrome c oxidase, the last enzyme in the mitochondrial electron transport chain which drives oxidative phosphorylation. The respiratory chain contains 3 multisubunit complexes succinate dehydrogenase (complex II, CII), ubiquinol-cytochrome c oxidoreductase (cytochrome b-c1 complex, complex III, CIII) and cytochrome c oxidase (complex IV, CIV), that cooperate to transfer electrons derived from NADH and succinate to molecular oxygen, creating an electrochemical gradient over the inner membrane that drives transmembrane transport and the ATP synthase. Cytochrome c oxidase is the component of the respiratory chain that catalyzes the reduction of oxygen to water. Electrons originating from reduced cytochrome c in the intermembrane space (IMS) are transferred via the dinuclear copper A center (CU(A)) of subunit 2 and heme A of subunit 1 to the active site in subunit 1, a binuclear center (BNC) formed by heme A3 and copper B (CU(B)). The BNC reduces molecular oxygen to 2 water molecules using 4 electrons from cytochrome c in the IMS and 4 protons from the mitochondrial matrix. This chain is Cytochrome c oxidase subunit 8C, mitochondrial (Cox8c), found in Mus musculus (Mouse).